Consider the following 227-residue polypeptide: ATP-dependent Clp protease proteolytic subunit 1 (227 aa).

The Nucleophile role is filled by Ser124. His149 is an active-site residue.

It belongs to the peptidase S14 family. In terms of assembly, fourteen ClpP subunits assemble into 2 heptameric rings which stack back to back to give a disk-like structure with a central cavity, resembling the structure of eukaryotic proteasomes.

Its subcellular location is the cytoplasm. The enzyme catalyses Hydrolysis of proteins to small peptides in the presence of ATP and magnesium. alpha-casein is the usual test substrate. In the absence of ATP, only oligopeptides shorter than five residues are hydrolyzed (such as succinyl-Leu-Tyr-|-NHMec, and Leu-Tyr-Leu-|-Tyr-Trp, in which cleavage of the -Tyr-|-Leu- and -Tyr-|-Trp bonds also occurs).. Cleaves peptides in various proteins in a process that requires ATP hydrolysis. Has a chymotrypsin-like activity. Plays a major role in the degradation of misfolded proteins. This Rhodopirellula baltica (strain DSM 10527 / NCIMB 13988 / SH1) protein is ATP-dependent Clp protease proteolytic subunit 1.